The following is a 1419-amino-acid chain: Myosin-2B (1419 aa).

One can recognise a Myosin N-terminal SH3-like domain in the interval 4 to 57 (EVGTRCWYPNSEAGWIGCEVTKNDFQDGTYHIELTSETGLVIPIETKHLESNNA). A Myosin motor domain is found at 75–780 (EATHDLTTLS…VLAYLEKIRS (706 aa)). ATP is bound at residue 169 to 176 (GESGAGKT). The tract at residues 451-531 (FIGVLDIYGF…LGILSLLDEE (81 aa)) is actin-binding. IQ domains lie at 783-805 (VTEL…LYLQ), 806-830 (AMLS…DFEM), 831-854 (KTDA…VFET), 855-878 (LKNI…QREF), 879-901 (ESRS…RYQT), and 902-931 (LKTG…QAES). A coiled-coil region spans residues 909-940 (IQALVRRKQSQEKLKQLKIQAESAASLKNSAA). Residues 1061 to 1419 (KDNERTSTSS…VIKELGSLLA (359 aa)) form a non alpha-helical, tail domain region. Residues 1143–1357 (HSILKQTVQD…LNHLSNTARR (215 aa)) enclose the Dilute domain.

The protein belongs to the TRAFAC class myosin-kinesin ATPase superfamily. Myosin family. Homodimer. Interacts with calmodulin (CMD1) and the myosin light chain MLC1 through its IQ repeats.

Myosin heavy chain that is required for the cell cycle-regulated transport of various organelles and proteins for their segregation. Functions by binding with its tail domain to receptor proteins on organelles and exerting force with its N-terminal motor domain against actin filaments, thereby transporting its cargo along polarized actin cables. This is Myosin-2B (MYO2B) from Naumovozyma castellii (Yeast).